A 490-amino-acid chain; its full sequence is Serine/threonine-protein kinase PBL35 (490 aa).

Disordered stretches follow at residues 1-39 (MGFDSVKVMENWQSKTSNENEKKKKKRRRKKNNNVRNSE) and 80-103 (SAIVQSNDQPVGPVSSTTTTSNAE). Residues 14–39 (SKTSNENEKKKKKRRRKKNNNVRNSE) adopt a coiled-coil conformation. Residues 23 to 33 (KKKKRRRKKNN) show a composition bias toward basic residues. Low complexity predominate over residues 94–103 (SSTTTTSNAE). A Protein kinase domain is found at 136–422 (FRPESLLGEG…VEVLKPLPHL (287 aa)). ATP contacts are provided by residues 142–150 (LGEGGFGCV) and lysine 174. Tyrosine 219 bears the Phosphotyrosine mark. Residue aspartate 269 is the Proton acceptor of the active site. Phosphoserine occurs at positions 273 and 303. Phosphothreonine is present on residues threonine 304 and threonine 309. Tyrosine 317 carries the phosphotyrosine modification. A disordered region spans residues 442 to 490 (AGSGSGSGRGFGSRNGQPVFRTLSSPHGQAGSSPYRHQIPSPKPKGATT). Residues 444 to 454 (SGSGSGRGFGS) are compositionally biased toward gly residues. Residues 463–473 (TLSSPHGQAGS) are compositionally biased toward polar residues.

The protein belongs to the protein kinase superfamily. Ser/Thr protein kinase family. Interacts with SD129. In terms of processing, phosphorylated by SD129 in response to the pathogen-associated molecular pattern (PAMP) 3-OH-C10:0, a medium-chain 3-hydroxy fatty acid.

The protein localises to the cell membrane. It carries out the reaction L-seryl-[protein] + ATP = O-phospho-L-seryl-[protein] + ADP + H(+). The enzyme catalyses L-threonyl-[protein] + ATP = O-phospho-L-threonyl-[protein] + ADP + H(+). Involved in chitin-triggered immune signaling and is required for reactive oxygen species (ROS) production. Acts downstream of SD129 in defense signaling triggered by the pathogen-associated molecular pattern (PAMP) 3-OH-C10:0, a medium-chain 3-hydroxy fatty acid. In Arabidopsis thaliana (Mouse-ear cress), this protein is Serine/threonine-protein kinase PBL35.